A 527-amino-acid polypeptide reads, in one-letter code: Phosphoethanolamine transferase OpgE (527 aa).

At 1-33 (MNLTLKESLVTRSRVFSPWTAFYFLQSLLINLG) the chain is on the periplasmic side. A helical transmembrane segment spans residues 34–54 (LGYPFSLLYTAAFTAILLLLW). At 55 to 62 (RTLPRVQK) the chain is on the cytoplasmic side. The helical transmembrane segment at 63–83 (VLVGVSSLVAACYFPFAQAYG) threads the bilayer. At 84–106 (APNFNTLLALHSTNMEESTEILT) the chain is on the periplasmic side. A helical transmembrane segment spans residues 107–127 (IFPWYSYLVGLFIFALGVIAI). The Cytoplasmic portion of the chain corresponds to 128–146 (RRKKENEKARWNTFDSLCL). A helical transmembrane segment spans residues 147–167 (VFSVATFFVAPVQNLAWGGVF). The Periplasmic segment spans residues 168–527 (KLKDTGYPVF…LGTDIFDPKP (360 aa)).

Belongs to the phosphoethanolamine transferase family.

Its subcellular location is the cell inner membrane. Its pathway is glycan metabolism; osmoregulated periplasmic glucan (OPG) biosynthesis. Functionally, catalyzes the addition of a phosphoethanolamine moiety to the osmoregulated periplasmic glucan (OPG) backbone. The chain is Phosphoethanolamine transferase OpgE (opgE) from Escherichia coli (strain K12).